The chain runs to 344 residues: MPIATPEVYNEMLDRAKEGGFAFPAINCTSSETINAALKGFAEAESDGIIQFSTGGAEFGSGLAVKNKVKGAVALAAFAHEAAKSYGINVALHTDHCQKEVLDEYVRPLLAISQERVDRGELPLFQSHMWDGSAVPIDENLEIAQELLAKAKAANIILEVEIGVVGGEEDGVEAKAGANLYTSPEDFEKTIDAIGTGEKGRYLLAATFGNVHGVYKPGNVKLRPEVLLEGQQVARKKLGLADDALPFDFVFHGGSGSEKEKIEEALTYGVIKMNVDTDTQYAFTRPIVSHMFENYNGVLKIDGEVGNKKAYDPRSYMKKAEQSMSERIIESCQDLKSVGKTTSK.

Serine 53 contributes to the D-glyceraldehyde 3-phosphate binding site. Aspartate 95 functions as the Proton donor in the catalytic mechanism. Zn(2+)-binding residues include histidine 96, aspartate 131, glutamate 161, and histidine 212. Glycine 213 lines the dihydroxyacetone phosphate pocket. Histidine 252 is a binding site for Zn(2+). Dihydroxyacetone phosphate is bound by residues 253–255 (GGS) and 274–277 (NVDT).

This sequence belongs to the class II fructose-bisphosphate aldolase family. The cofactor is Zn(2+).

The enzyme catalyses beta-D-fructose 1,6-bisphosphate = D-glyceraldehyde 3-phosphate + dihydroxyacetone phosphate. Its pathway is carbohydrate degradation; glycolysis; D-glyceraldehyde 3-phosphate and glycerone phosphate from D-glucose: step 4/4. Catalyzes the aldol condensation of dihydroxyacetone phosphate (DHAP or glycerone-phosphate) with glyceraldehyde 3-phosphate (G3P) to form fructose 1,6-bisphosphate (FBP) in gluconeogenesis and the reverse reaction in glycolysis. The protein is Fructose-bisphosphate aldolase (fba) of Corynebacterium glutamicum (strain ATCC 13032 / DSM 20300 / JCM 1318 / BCRC 11384 / CCUG 27702 / LMG 3730 / NBRC 12168 / NCIMB 10025 / NRRL B-2784 / 534).